The primary structure comprises 536 residues: Thiamine transport system permease protein ThiP (536 aa).

12 helical membrane-spanning segments follow: residues 12 to 32 (WLIP…AAFL), 58 to 78 (FSFW…IFLA), 95 to 115 (LCAM…LSVY), 134 to 154 (FSPY…LPMA), 199 to 219 (VAAL…SLGG), 240 to 260 (PARA…LVLL), 293 to 313 (VLIV…IVDG), 334 to 354 (SLRI…MLLW), 374 to 394 (SGML…FLLL), 404 to 424 (ADGI…LKVL), 463 to 483 (AQAL…VALF), and 506 to 526 (DGAV…TVIE). One can recognise an ABC transmembrane type-1 1 domain in the interval 56-261 (VRFSFWQAFL…VCCLGLVLLS (206 aa)). The 195-residue stretch at 331 to 525 (LWTSLRIALA…LLCFLLFTVI (195 aa)) folds into the ABC transmembrane type-1 2 domain.

Belongs to the binding-protein-dependent transport system permease family. CysTW subfamily. As to quaternary structure, the complex is composed of two ATP-binding proteins (ThiQ), two transmembrane proteins (ThiP) and a solute-binding protein (ThiB).

It localises to the cell inner membrane. Transport is inhibited by the sulfhydryl-specific modifier N-ethylmaleimide. Its function is as follows. Part of the ABC transporter complex ThiBPQ involved in thiamine import. Probably responsible for the translocation of the substrate across the membrane. This chain is Thiamine transport system permease protein ThiP (thiP), found in Escherichia coli (strain K12).